The chain runs to 896 residues: NET1-associated nuclear protein 1 (896 aa).

4 WD repeats span residues 295-334 (WHID…QQFL), 490-542 (LQDP…TNWN), 552-595 (GISV…SNWC), and 605-645 (NHFS…ESLE).

Interacts with snoRNA U3. Interacts with MPP10. Component of the ribosomal small subunit (SSU) processome composed of at least 40 protein subunits and snoRNA U3. In the absence of snoRNA3, forms a complex with other t-UTPs. This complex can associate with pre-18S ribosomal RNAs.

It localises to the nucleus. The protein localises to the nucleolus. Functionally, involved in nucleolar processing of pre-18S ribosomal RNA. Required for optimal pre-ribosomal RNA transcription by RNA polymerase I together with a subset of U3 proteins required for transcription (t-UTPs). The protein is NET1-associated nuclear protein 1 (NAN1) of Saccharomyces cerevisiae (strain ATCC 204508 / S288c) (Baker's yeast).